Here is a 311-residue protein sequence, read N- to C-terminus: Homeobox protein knotted-1-like 10 (311 aa).

Disordered regions lie at residues 1–45 and 153–184; these read MEDL…PATT and LCGGAPPPTDNSDEMVGSSEDEPCSGDADAAD. The segment covering 12 to 22 has biased composition (gly residues); it reads SRGGGGGGGGA. An ELK domain is found at 197–217; that stretch reads ELKEMLLKKYSGCLSRLRSEF. Residues 218 to 281 constitute a DNA-binding region (homeobox; TALE-type); it reads LKKRKKGKLP…NQRKRHWKPS (64 aa).

Belongs to the TALE/KNOX homeobox family.

Its subcellular location is the nucleus. Probable transcription factor that may be involved in shoot formation during embryogenesis. The protein is Homeobox protein knotted-1-like 10 (OSH71) of Oryza sativa subsp. indica (Rice).